A 467-amino-acid polypeptide reads, in one-letter code: Glutamate--tRNA ligase (467 aa).

A 'HIGH' region motif is present at residues 9–19 (PSPTGNLHIGS). A 'KMSKS' region motif is present at residues 237–241 (KISKR). Lys-240 serves as a coordination point for ATP.

Belongs to the class-I aminoacyl-tRNA synthetase family. Glutamate--tRNA ligase type 1 subfamily. In terms of assembly, monomer.

The protein localises to the cytoplasm. The catalysed reaction is tRNA(Glu) + L-glutamate + ATP = L-glutamyl-tRNA(Glu) + AMP + diphosphate. Catalyzes the attachment of glutamate to tRNA(Glu) in a two-step reaction: glutamate is first activated by ATP to form Glu-AMP and then transferred to the acceptor end of tRNA(Glu). This is Glutamate--tRNA ligase from Buchnera aphidicola subsp. Acyrthosiphon pisum (strain APS) (Acyrthosiphon pisum symbiotic bacterium).